The sequence spans 397 residues: Succinyl-diaminopimelate desuccinylase (397 aa).

Position 73 (His73) interacts with Zn(2+). Asp75 is a catalytic residue. Asp106 contributes to the Zn(2+) binding site. The active-site Proton acceptor is Glu140. Residues Glu141, Glu169, and His366 each coordinate Zn(2+).

It belongs to the peptidase M20A family. DapE subfamily. In terms of assembly, homodimer. Zn(2+) serves as cofactor. It depends on Co(2+) as a cofactor.

It carries out the reaction N-succinyl-(2S,6S)-2,6-diaminopimelate + H2O = (2S,6S)-2,6-diaminopimelate + succinate. Its pathway is amino-acid biosynthesis; L-lysine biosynthesis via DAP pathway; LL-2,6-diaminopimelate from (S)-tetrahydrodipicolinate (succinylase route): step 3/3. Catalyzes the hydrolysis of N-succinyl-L,L-diaminopimelic acid (SDAP), forming succinate and LL-2,6-diaminopimelate (DAP), an intermediate involved in the bacterial biosynthesis of lysine and meso-diaminopimelic acid, an essential component of bacterial cell walls. The chain is Succinyl-diaminopimelate desuccinylase from Rhizobium rhizogenes (strain K84 / ATCC BAA-868) (Agrobacterium radiobacter).